The sequence spans 1129 residues: MAVKSIKVKLRLDDMPEIRAGLWKLHKEVNAGVRYYTEWLSLLRQENLYRRSPNGDGEQECDKTAEECKAELLERLRARQVENGHRGPAGSDDELLQLARQLYELLVPQAIGAKGDAQQIARKFLSPLADKDAVGGLGIAKAGNKPRWVRMREAGEPGWEEEKEKAETRKSADRTADVLRALADFGLKPLMRVYTDSEMSSVEWKPLRKGQAVRTWDRDMFQQAIERMMSWESWNQRVGQEYAKLVEQKNRFEQKNFVGQEHLVHLVNQLQQDMKEASPGLESKEQTAHYVTGRALRGSDKVFEKWGKLAPDAPFDLYDAEIKNVQRRNTRRFGSHDLFAKLAEPEYQALWREDASFLTRYAVYNSILRKLNHAKMFATFTLPDATAHPIWTRFDKLGGNLHQYTFLFNEFGERRHAIRFHKLLKVENGVAREVDDVTVPISMSEQLDNLLPRDPNEPIALYFRDYGAEQHFTGEFGGAKIQCRRDQLAHMHRRRGARDVYLNVSVRVQSQSEARGERRPPYAAVFRLVGDNHRAFVHFDKLSDYLAEHPDDGKLGSEGLLSGLRVMSVDLGLRTSASISVFRVARKDELKPNSKGRVPFFFPIKGNDNLVAVHERSQLLKLPGETESKDLRAIREERQRTLRQLRTQLAYLRLLVRCGSEDVGRRERSWAKLIEQPVDAANHMTPDWREAFENELQKLKSLHGICSDKEWMDAVYESVRRVWRHMGKQVRDWRKDVRSGERPKIRGYAKDVVGGNSIEQIEYLERQYKFLKSWSFFGKVSGQVIRAEKGSRFAITLREHIDHAKEDRLKKLADRIIMEALGYVYALDERGKGKWVAKYPPCQLILLEELSEYQFNNDRPPSENNQLMQWSHRGVFQELINQAQVHDLLVGTMYAAFSSRFDARTGAPGIRCRRVPARCTQEHNPEPFPWWLNKFVVEHTLDACPLRADDLIPTGEGEIFVSPFSAEEGDFHQIHADLNAAQNLQQRLWSDFDISQIRLRCDWGEVDGELVLIPRLTGKRTADSYSNKVFYTNTGVTYYERERGKKRRKVFAQEKLSEEEAELLVEADEAREKSVVLMRDPSGIINRGNWTRQKEFWSMVNQRIEGYLVKQIRSRVPLQDSACENTGDI.

Residues 1–14 (MAVKSIKVKLRLDD) are WED-I (OBD-I) domain. The binds sgRNA stretch occupies residues 4 to 9 (KSIKVK). An REC1 (Helical-1)domain region spans residues 15 to 386 (MPEIRAGLWK…FATFTLPDAT (372 aa)). Binds DNA protospacer adjacent motif (PAM) on target DNA stretches follow at residues 118-122 (QQIAR) and 143-144 (GN). The segment at 387-518 (AHPIWTRFDK…QSQSEARGER (132 aa)) is WED-II (OBD-II) domain. The binds sgRNA stretch occupies residues 442–446 (SMSEQ). Positions 519-628 (RPPYAAVFRL…LLKLPGETES (110 aa)) are ruvC-I domain. D570 (for DNase activity of RuvC domain) is an active-site residue. The interval 573–574 (LR) is binds non-target ssDNA. The tract at residues 629–658 (KDLRAIREERQRTLRQLRTQLAYLRLLVRC) is bridge helix domain. Residues 659-784 (GSEDVGRRER…SFFGKVSGQV (126 aa)) are REC2 (Helical-II) domain. Binds sgRNA regions lie at residues 742-746 (RPKIR), 753-754 (VG), 792-796 (RFAIT), 800-819 (HIDH…IIME), and 835-839 (WVAKY). The ruvC-II domain stretch occupies residues 785-900 (IRAEKGSRFA…GTMYAAFSSR (116 aa)). E848 (for DNase activity of RuvC domain) is an active-site residue. Positions 897 to 900 (FSSR) are binds non-target ssDNA. Phosphate-binding residues include S899 and R911. Positions 901–974 (FDARTGAPGI…SAEEGDFHQI (74 aa)) are nuc-I domain. The interval 973-978 (QIHADL) is binds sgRNA. Positions 975-993 (HADLNAAQNLQQRLWSDFD) are ruvC-III domain. D977 (for DNase activity of RuvC domain) is an active-site residue. Residues 994 to 1129 (ISQIRLRCDW…DSACENTGDI (136 aa)) form a nuc-II domain region.

Belongs to the CRISPR-associated endonuclease Cas12b family. As to quaternary structure, monomer. A divalent metal cation serves as cofactor.

Its function is as follows. CRISPR (clustered regularly interspaced short palindromic repeat), is an adaptive immune system that provides protection against mobile genetic elements (viruses, transposable elements and conjugative plasmids). CRISPR clusters contain sequences complementary to antecedent mobile elements and target invading nucleic acids. CRISPR clusters are transcribed and processed into CRISPR RNA (crRNA). In type II CRISPR systems correct processing of pre-crRNA requires a trans-encoded small RNA (tracrRNA), endogenous ribonuclease 3 (rnc) and this protein. The tracrRNA serves as a guide for ribonuclease 3-aided processing of pre-crRNA. Protein-crRNA-tracrRNA endonucleolytically cleave dsDNA target complementary to the spacer; protein is inactive in the absence of crRNA homologous to the target and tracrRNA. Recognizes a short motif in the CRISPR repeat sequences (the 5' PAM or protospacer adjacent motif, TTN in this organism) to help distinguish self versus nonself, as targets within the bacterial CRISPR locus do not have PAMs. PAM recognition is also required for catalytic activity. Cleavage results in staggered 6-8 base 5'-overhangs 14-17 and 23-24 bases downstream of the PAM (protospacer adjacent motif) on the non-target and target strands respectively. Both target and non-target strand DNA are probably independently cleaved in the same active site. The protein is CRISPR-associated endonuclease Cas12b of Alicyclobacillus acidoterrestris (strain ATCC 49025 / DSM 3922 / CIP 106132 / NCIMB 13137 / GD3B).